Reading from the N-terminus, the 304-residue chain is tRNA-uridine aminocarboxypropyltransferase 1 (304 aa).

Ser-2 carries the N-acetylserine modification. Residues 206 to 209 (DSTW) carry the DXTW motif.

The protein belongs to the TDD superfamily. DTWD1 family.

The protein resides in the nucleus. The catalysed reaction is a uridine in tRNA + S-adenosyl-L-methionine = a 3-[(3S)-3-amino-3-carboxypropyl]uridine in tRNA + S-methyl-5'-thioadenosine + H(+). In terms of biological role, catalyzes the formation of 3-(3-amino-3-carboxypropyl)uridine (acp3U) at position 20 in the D-loop of several cytoplasmic tRNAs (acp3U(20)). In Homo sapiens (Human), this protein is tRNA-uridine aminocarboxypropyltransferase 1.